The following is a 147-amino-acid chain: Ribonuclease 4 (147 aa).

A signal peptide spans 1–28 (MALQRTHSLLLLLLLTLLGLGLVQPSYG). A Pyrrolidone carboxylic acid modification is found at glutamine 29. DUMP contacts are provided by arginine 35, histidine 40, lysine 68, asparagine 71, and threonine 72. Catalysis depends on histidine 40, which acts as the Proton acceptor. Intrachain disulfides connect cysteine 53-cysteine 109, cysteine 67-cysteine 120, cysteine 85-cysteine 135, and cysteine 92-cysteine 99. Histidine 144 acts as the Proton donor in catalysis. Phenylalanine 145 contacts dUMP.

This sequence belongs to the pancreatic ribonuclease family. In terms of tissue distribution, expressed in the cortical and medullary tubules of the kidney, and in the transitional epithelium of the urinary bladder (at protein level).

It localises to the secreted. Cleaves preferentially after uridine bases. Has antimicrobial activity against uropathogenic E.coli (UPEC). Probably contributes to urinary tract sterility. This chain is Ribonuclease 4 (RNASE4), found in Homo sapiens (Human).